Consider the following 343-residue polypeptide: tRNA N6-adenosine threonylcarbamoyltransferase (343 aa).

His111 and His115 together coordinate Fe cation. Residues 135 to 139, Asp168, Gly181, and Asn280 contribute to the substrate site; that span reads VLSGG. Asp306 is a Fe cation binding site.

The protein belongs to the KAE1 / TsaD family. Fe(2+) serves as cofactor.

It is found in the cytoplasm. It catalyses the reaction L-threonylcarbamoyladenylate + adenosine(37) in tRNA = N(6)-L-threonylcarbamoyladenosine(37) in tRNA + AMP + H(+). Functionally, required for the formation of a threonylcarbamoyl group on adenosine at position 37 (t(6)A37) in tRNAs that read codons beginning with adenine. Is involved in the transfer of the threonylcarbamoyl moiety of threonylcarbamoyl-AMP (TC-AMP) to the N6 group of A37, together with TsaE and TsaB. TsaD likely plays a direct catalytic role in this reaction. The protein is tRNA N6-adenosine threonylcarbamoyltransferase of Protochlamydia amoebophila (strain UWE25).